The following is a 467-amino-acid chain: Nuclear distribution protein nudF 1 (467 aa).

Residues 9 to 41 (QAEELHKSIIAYLASVNLSESATTLRAELGDAV) enclose the LisH domain. Residues 60–87 (TSVVRLQKKIMDLESRCAALQSELDSAT) adopt a coiled-coil conformation. WD repeat units lie at residues 113–154 (SHRS…RTVK), 156–196 (HTKA…KNIR), 200–247 (GHDH…CVKT), 250–289 (GHVD…TRST), 292–352 (GHEH…IKTL), 354–393 (GHDN…KCVR), 398–428 (THEH…NGTP), and 429–466 (AATT…RVFA). Residues 417 to 437 (GANGDAGANGTPAATTTSNGA) are compositionally biased toward low complexity. The interval 417–441 (GANGDAGANGTPAATTTSNGARQDP) is disordered.

It belongs to the WD repeat LIS1/nudF family. As to quaternary structure, self-associates. Interacts with nudE and dynein.

The protein localises to the cytoplasm. It is found in the cytoskeleton. It localises to the spindle pole. Positively regulates the activity of the minus-end directed microtubule motor protein dynein. May enhance dynein-mediated microtubule sliding by targeting dynein to the microtubule plus end. Required for nuclear migration during vegetative growth as well as development. Required for retrograde early endosome (EE) transport from the hyphal tip. Required for localization of dynein to the mitotic spindle poles. Recruits additional proteins to the dynein complex at SPBs. The sequence is that of Nuclear distribution protein nudF 1 from Aspergillus clavatus (strain ATCC 1007 / CBS 513.65 / DSM 816 / NCTC 3887 / NRRL 1 / QM 1276 / 107).